The chain runs to 402 residues: Exodeoxyribonuclease 7 large subunit (402 aa).

This sequence belongs to the XseA family. In terms of assembly, heterooligomer composed of large and small subunits.

It is found in the cytoplasm. It catalyses the reaction Exonucleolytic cleavage in either 5'- to 3'- or 3'- to 5'-direction to yield nucleoside 5'-phosphates.. Its function is as follows. Bidirectionally degrades single-stranded DNA into large acid-insoluble oligonucleotides, which are then degraded further into small acid-soluble oligonucleotides. The polypeptide is Exodeoxyribonuclease 7 large subunit (Moorella thermoacetica (strain ATCC 39073 / JCM 9320)).